Consider the following 135-residue polypeptide: uncharacterized protein (135 aa).

The 126-residue stretch at 4-129 (SIVHIALVVN…YGNLWDLLQL (126 aa)) folds into the VOC domain.

It to B.subtilis YwkD.

This is an uncharacterized protein from Shewanella frigidimarina (strain NCIMB 400).